The sequence spans 1414 residues: DNA-directed RNA polymerase subunit beta' (1414 aa).

Zn(2+)-binding residues include C72, C74, C87, and C90. D463, D465, and D467 together coordinate Mg(2+). Positions 811, 885, 892, and 895 each coordinate Zn(2+).

This sequence belongs to the RNA polymerase beta' chain family. As to quaternary structure, the RNAP catalytic core consists of 2 alpha, 1 beta, 1 beta' and 1 omega subunit. When a sigma factor is associated with the core the holoenzyme is formed, which can initiate transcription. Mg(2+) is required as a cofactor. Zn(2+) serves as cofactor.

It catalyses the reaction RNA(n) + a ribonucleoside 5'-triphosphate = RNA(n+1) + diphosphate. DNA-dependent RNA polymerase catalyzes the transcription of DNA into RNA using the four ribonucleoside triphosphates as substrates. This chain is DNA-directed RNA polymerase subunit beta', found in Roseobacter denitrificans (strain ATCC 33942 / OCh 114) (Erythrobacter sp. (strain OCh 114)).